The chain runs to 253 residues: Allene oxide cyclase 2, chloroplastic (253 aa).

A chloroplast-targeting transit peptide spans 1–77 (MASSAVSLQS…SQNGNIENPR (77 aa)).

Belongs to the allene oxide cyclase family. As to expression, highly expressed in fully developed leaves.

The protein resides in the plastid. Its subcellular location is the chloroplast. The catalysed reaction is (9Z,13S,15Z)-12,13-epoxyoctadeca-9,11,15-trienoate = (9S,13S,15Z)-12-oxophyto-10,15-dienoate. In terms of biological role, involved in the production of 12-oxo-phytodienoic acid (OPDA), a precursor of jasmonic acid. This chain is Allene oxide cyclase 2, chloroplastic (AOC2), found in Arabidopsis thaliana (Mouse-ear cress).